The sequence spans 238 residues: Probable transcriptional regulatory protein LACR_0237 (238 aa).

Belongs to the TACO1 family. YeeN subfamily.

The protein resides in the cytoplasm. This is Probable transcriptional regulatory protein LACR_0237 from Lactococcus lactis subsp. cremoris (strain SK11).